A 356-amino-acid chain; its full sequence is tRNA N6-adenosine threonylcarbamoyltransferase (356 aa).

Residues His-116 and His-120 each coordinate Fe cation. Substrate contacts are provided by residues 139 to 143, Asp-174, Gly-187, Asp-191, and Asn-281; that span reads IVSGG. Residue Asp-309 participates in Fe cation binding.

This sequence belongs to the KAE1 / TsaD family. Fe(2+) is required as a cofactor.

It localises to the cytoplasm. It catalyses the reaction L-threonylcarbamoyladenylate + adenosine(37) in tRNA = N(6)-L-threonylcarbamoyladenosine(37) in tRNA + AMP + H(+). Its function is as follows. Required for the formation of a threonylcarbamoyl group on adenosine at position 37 (t(6)A37) in tRNAs that read codons beginning with adenine. Is involved in the transfer of the threonylcarbamoyl moiety of threonylcarbamoyl-AMP (TC-AMP) to the N6 group of A37, together with TsaE and TsaB. TsaD likely plays a direct catalytic role in this reaction. In Frankia alni (strain DSM 45986 / CECT 9034 / ACN14a), this protein is tRNA N6-adenosine threonylcarbamoyltransferase.